The chain runs to 420 residues: CinA-like protein (420 aa).

It belongs to the CinA family.

This Chloroherpeton thalassium (strain ATCC 35110 / GB-78) protein is CinA-like protein.